The primary structure comprises 209 residues: Thiamine-phosphate synthase (209 aa).

4-amino-2-methyl-5-(diphosphooxymethyl)pyrimidine-binding positions include 40–44 (QLREK) and Asn-72. Residues Asp-73 and Asp-92 each coordinate Mg(2+). A 4-amino-2-methyl-5-(diphosphooxymethyl)pyrimidine-binding site is contributed by Ser-111. 137–139 (TNS) serves as a coordination point for 2-[(2R,5Z)-2-carboxy-4-methylthiazol-5(2H)-ylidene]ethyl phosphate. Position 140 (Lys-140) interacts with 4-amino-2-methyl-5-(diphosphooxymethyl)pyrimidine. Residues Gly-167 and 187-188 (IS) each bind 2-[(2R,5Z)-2-carboxy-4-methylthiazol-5(2H)-ylidene]ethyl phosphate.

Belongs to the thiamine-phosphate synthase family. The cofactor is Mg(2+).

The enzyme catalyses 2-[(2R,5Z)-2-carboxy-4-methylthiazol-5(2H)-ylidene]ethyl phosphate + 4-amino-2-methyl-5-(diphosphooxymethyl)pyrimidine + 2 H(+) = thiamine phosphate + CO2 + diphosphate. It catalyses the reaction 2-(2-carboxy-4-methylthiazol-5-yl)ethyl phosphate + 4-amino-2-methyl-5-(diphosphooxymethyl)pyrimidine + 2 H(+) = thiamine phosphate + CO2 + diphosphate. The catalysed reaction is 4-methyl-5-(2-phosphooxyethyl)-thiazole + 4-amino-2-methyl-5-(diphosphooxymethyl)pyrimidine + H(+) = thiamine phosphate + diphosphate. Its pathway is cofactor biosynthesis; thiamine diphosphate biosynthesis; thiamine phosphate from 4-amino-2-methyl-5-diphosphomethylpyrimidine and 4-methyl-5-(2-phosphoethyl)-thiazole: step 1/1. Its function is as follows. Condenses 4-methyl-5-(beta-hydroxyethyl)thiazole monophosphate (THZ-P) and 2-methyl-4-amino-5-hydroxymethyl pyrimidine pyrophosphate (HMP-PP) to form thiamine monophosphate (TMP). The chain is Thiamine-phosphate synthase from Clostridium tetani (strain Massachusetts / E88).